Reading from the N-terminus, the 387-residue chain is Phosphoglycerate kinase (387 aa).

Residues 21-23 (DLN), R36, 59-62 (HLGR), R113, and R146 each bind substrate. ATP-binding positions include K197, E314, and 340-343 (GGDT).

This sequence belongs to the phosphoglycerate kinase family. As to quaternary structure, monomer.

It is found in the cytoplasm. The enzyme catalyses (2R)-3-phosphoglycerate + ATP = (2R)-3-phospho-glyceroyl phosphate + ADP. It participates in carbohydrate degradation; glycolysis; pyruvate from D-glyceraldehyde 3-phosphate: step 2/5. This Marinomonas sp. (strain MWYL1) protein is Phosphoglycerate kinase.